The primary structure comprises 199 residues: Probable GTP-binding protein EngB (199 aa).

The EngB-type G domain maps to 28 to 199; it reads DLPEIALAGR…DSWDAILEQV (172 aa). GTP contacts are provided by residues 36-43, 63-67, 81-84, 148-151, and 180-182; these read GRSNVGKS, GKTQL, DVPG, TKAD, and FSS. Mg(2+) contacts are provided by serine 43 and threonine 65.

This sequence belongs to the TRAFAC class TrmE-Era-EngA-EngB-Septin-like GTPase superfamily. EngB GTPase family. Mg(2+) serves as cofactor.

In terms of biological role, necessary for normal cell division and for the maintenance of normal septation. This is Probable GTP-binding protein EngB from Streptococcus pyogenes serotype M49 (strain NZ131).